The sequence spans 216 residues: 3-isopropylmalate dehydratase small subunit (216 aa).

This sequence belongs to the LeuD family. LeuD type 1 subfamily. Heterodimer of LeuC and LeuD.

The enzyme catalyses (2R,3S)-3-isopropylmalate = (2S)-2-isopropylmalate. Its pathway is amino-acid biosynthesis; L-leucine biosynthesis; L-leucine from 3-methyl-2-oxobutanoate: step 2/4. Functionally, catalyzes the isomerization between 2-isopropylmalate and 3-isopropylmalate, via the formation of 2-isopropylmaleate. The sequence is that of 3-isopropylmalate dehydratase small subunit from Cupriavidus pinatubonensis (strain JMP 134 / LMG 1197) (Cupriavidus necator (strain JMP 134)).